The primary structure comprises 227 residues: Uracil-DNA glycosylase (227 aa).

Asp-68 functions as the Proton acceptor in the catalytic mechanism.

This sequence belongs to the uracil-DNA glycosylase (UDG) superfamily. UNG family.

The protein localises to the cytoplasm. The catalysed reaction is Hydrolyzes single-stranded DNA or mismatched double-stranded DNA and polynucleotides, releasing free uracil.. In terms of biological role, excises uracil residues from the DNA which can arise as a result of misincorporation of dUMP residues by DNA polymerase or due to deamination of cytosine. The protein is Uracil-DNA glycosylase of Mycobacterium avium (strain 104).